A 251-amino-acid chain; its full sequence is Protein phosphatase 1 regulatory subunit 35 (251 aa).

Disordered stretches follow at residues 58–99 and 180–235; these read LITV…QQTH and PALA…VPRP. Positions 76-99 are enriched in basic and acidic residues; that stretch reads PNKDEHGVETDREQSRECDGQQTH.

This sequence belongs to the PPP1R35 family.

The protein resides in the cytoplasm. Its subcellular location is the cytoskeleton. The protein localises to the microtubule organizing center. It is found in the centrosome. It localises to the centriole. Functionally, during centriole duplication, may play a role in the centriole elongation by promoting the recruitment of the microtubule-binding elongation machinery, leading to the centriole to centrosome conversion. In addition may play a role in the primary cilia assembly. This Danio rerio (Zebrafish) protein is Protein phosphatase 1 regulatory subunit 35.